A 256-amino-acid polypeptide reads, in one-letter code: MKEILITNDDGFEAKGLHELADALRQIPDVNVTIVAPSSEKSACAHSLTLTKPLRFIKIDDNFFKLDDATPSDCVYLALHALYQKKPDLVISGINHGANLGEDITYSGTCGAAMEGVLQGIKSIAFSQFYKNNSIEELGFSLACQIVKFIVPRVLEGEICLPQRQFLNVNIPAVAARDFKGYKVAPAGRRCYATHATLNRNPRGVEYYWLGNAALDYEEGQISDISVINDGFASLTPIQLDMTAHASLENLKKSFQ.

A divalent metal cation-binding residues include D9, D10, S42, and N95.

The protein belongs to the SurE nucleotidase family. The cofactor is a divalent metal cation.

The protein localises to the cytoplasm. The enzyme catalyses a ribonucleoside 5'-phosphate + H2O = a ribonucleoside + phosphate. Its function is as follows. Nucleotidase that shows phosphatase activity on nucleoside 5'-monophosphates. The protein is 5'-nucleotidase SurE of Campylobacter curvus (strain 525.92).